The primary structure comprises 393 residues: Dual-specificity RNA methyltransferase RlmN (393 aa).

Glu114 acts as the Proton acceptor in catalysis. The Radical SAM core domain occupies 120–359 (EDDRATLCVS…VIVRKTRGDD (240 aa)). Cys127 and Cys364 are oxidised to a cystine. The [4Fe-4S] cluster site is built by Cys134, Cys138, and Cys141. S-adenosyl-L-methionine contacts are provided by residues 188–189 (GE), Ser220, 242–244 (SLH), and Asn321. Cys364 (S-methylcysteine intermediate) is an active-site residue.

The protein belongs to the radical SAM superfamily. RlmN family. [4Fe-4S] cluster serves as cofactor.

It is found in the cytoplasm. The catalysed reaction is adenosine(2503) in 23S rRNA + 2 reduced [2Fe-2S]-[ferredoxin] + 2 S-adenosyl-L-methionine = 2-methyladenosine(2503) in 23S rRNA + 5'-deoxyadenosine + L-methionine + 2 oxidized [2Fe-2S]-[ferredoxin] + S-adenosyl-L-homocysteine. The enzyme catalyses adenosine(37) in tRNA + 2 reduced [2Fe-2S]-[ferredoxin] + 2 S-adenosyl-L-methionine = 2-methyladenosine(37) in tRNA + 5'-deoxyadenosine + L-methionine + 2 oxidized [2Fe-2S]-[ferredoxin] + S-adenosyl-L-homocysteine. Functionally, specifically methylates position 2 of adenine 2503 in 23S rRNA and position 2 of adenine 37 in tRNAs. m2A2503 modification seems to play a crucial role in the proofreading step occurring at the peptidyl transferase center and thus would serve to optimize ribosomal fidelity. This is Dual-specificity RNA methyltransferase RlmN from Actinobacillus pleuropneumoniae serotype 5b (strain L20).